A 293-amino-acid polypeptide reads, in one-letter code: Peptidoglycan deacetylase (293 aa).

Zn(2+)-binding residues include Asp14, His86, and His90. One can recognise a NodB homology domain in the interval 29 to 276 (PDDISRGLFA…INKHEGVRWV (248 aa)).

This sequence belongs to the polysaccharide deacetylase family. As to quaternary structure, homotetramer.

The catalysed reaction is Deacetylation of xylans and xylo-oligosaccharides.. In terms of biological role, catalyzes the N-deacetylation of peptidoglycan (PG), an important mechanism that appears to confer lysozyme resistance and to mitigate host immune detection; this likely contributes to pathogen persistence in the host. The exact nature of the residue in PG that is deacetylated has not been determined. Is also able to catalyze the deacetylation of acetylated xylan, and, to a lesser extent, that of chitin and chitosan. Therefore, this enzyme might play a role during infection, considering that xylan-containing carbohydrate structures are among those commonly consumed by humans. In Helicobacter pylori (strain ATCC 700392 / 26695) (Campylobacter pylori), this protein is Peptidoglycan deacetylase (pgdA).